Consider the following 547-residue polypeptide: Glucose-6-phosphate isomerase (547 aa).

The Proton donor role is filled by Glu-351. Active-site residues include His-382 and Lys-509.

This sequence belongs to the GPI family.

The protein resides in the cytoplasm. It catalyses the reaction alpha-D-glucose 6-phosphate = beta-D-fructose 6-phosphate. The protein operates within carbohydrate biosynthesis; gluconeogenesis. It functions in the pathway carbohydrate degradation; glycolysis; D-glyceraldehyde 3-phosphate and glycerone phosphate from D-glucose: step 2/4. Catalyzes the reversible isomerization of glucose-6-phosphate to fructose-6-phosphate. The sequence is that of Glucose-6-phosphate isomerase from Coxiella burnetii (strain CbuK_Q154) (Coxiella burnetii (strain Q154)).